The primary structure comprises 391 residues: Paired box protein Pax-5 (391 aa).

Positions 1 to 21 (MDLEKNYPTPRTSRTGHGGVN) are disordered. The paired DNA-binding region spans 16–142 (GHGGVNQLGG…SSINRIIRTK (127 aa)). Residues 19–75 (GVNQLGGVFVNGRPLPDVVRQRIVELAHQGVRPCDISRQLRVSHGCVSKILGRYYET) form a PAI subdomain region. Positions 94–142 (KVVEKIAEYKRQNPTMFAWEIRDRLLAERVCDNDTVPSVSSINRIIRTK) are RED subdomain. Residues 182 to 218 (SGILGITSPSADTNKRKRDEGIQESPVPNGHSLPGRD) form a disordered region.

Interacts with ETS1; this interaction alters PAX5 DNA-binding properties. Binds DNA as a monomer. Interacts with TBP; this interaction allows PAX5 to interact with the basal transcription machinery. Interacts with RB1. Interacts with TLE4. Interacts with DAXX. As to quaternary structure, (Microbial infection) Interacts (via N-terminus) with Epstein-Barr virus protein BZLF1 (via C-terminus); this interaction inhibits BZLF1-mediated lytic viral reactivation. Interacts also with EBNA1; this interaction promotes EBNA1-dependent transcription. Post-translationally, O-glycosylated. In terms of processing, phosphorylated by SYK. This phosphorylation plays an important role in the abolition of BLIMP1 repression by PAX5 in order to trigger plasma cell differentiation.

It is found in the nucleus. Its function is as follows. Transcription factor that plays an essential role in commitment of lymphoid progenitors to the B-lymphocyte lineage. Fulfills a dual role by repressing B-lineage inappropriate genes and simultaneously activating B-lineage-specific genes. In turn, regulates cell adhesion and migration, induces V(H)-to-D(H)J(H) recombination, facilitates pre-B-cell receptor signaling and promotes development to the mature B-cell stage. Repression of the cohesin-release factor WAPL causes global changes of the chromosomal architecture in pro-B cells to facilitate the generation of a diverse antibody repertoire. Functionally, (Microbial infection) Plays an essential role in the maintenance of Epstein-Barr virus genome copy number within the host cell by promoting EBNA1/oriP-dependent binding and transcription. Also participates in the inhibition of lytic EBV reactivation by modulating viral BZLF1 activity. This is Paired box protein Pax-5 (PAX5) from Homo sapiens (Human).